The following is a 552-amino-acid chain: Hydroxylamine reductase (552 aa).

[2Fe-2S] cluster contacts are provided by Cys-5, Cys-8, Cys-20, and Cys-27. Residues His-251, Glu-275, Cys-319, Cys-407, Cys-435, Cys-460, Glu-494, and Lys-496 each contribute to the hybrid [4Fe-2O-2S] cluster site. A Cysteine persulfide modification is found at Cys-407.

Belongs to the HCP family. Requires [2Fe-2S] cluster as cofactor. It depends on hybrid [4Fe-2O-2S] cluster as a cofactor.

It localises to the cytoplasm. The enzyme catalyses A + NH4(+) + H2O = hydroxylamine + AH2 + H(+). Functionally, catalyzes the reduction of hydroxylamine to form NH(3) and H(2)O. This Shigella boydii serotype 4 (strain Sb227) protein is Hydroxylamine reductase.